The sequence spans 198 residues: 3-isopropylmalate dehydratase small subunit (198 aa).

This sequence belongs to the LeuD family. LeuD type 1 subfamily. Heterodimer of LeuC and LeuD.

The catalysed reaction is (2R,3S)-3-isopropylmalate = (2S)-2-isopropylmalate. It functions in the pathway amino-acid biosynthesis; L-leucine biosynthesis; L-leucine from 3-methyl-2-oxobutanoate: step 2/4. Its function is as follows. Catalyzes the isomerization between 2-isopropylmalate and 3-isopropylmalate, via the formation of 2-isopropylmaleate. This Colwellia psychrerythraea (strain 34H / ATCC BAA-681) (Vibrio psychroerythus) protein is 3-isopropylmalate dehydratase small subunit.